Consider the following 249-residue polypeptide: Coproheme decarboxylase (249 aa).

Fe-coproporphyrin III contacts are provided by residues arginine 131, 145 to 149, histidine 172, and glutamine 185; that span reads YPMDK. Tyrosine 145 is an active-site residue.

The protein belongs to the ChdC family. Type 1 subfamily. It depends on Fe-coproporphyrin III as a cofactor.

The catalysed reaction is Fe-coproporphyrin III + 2 H2O2 + 2 H(+) = heme b + 2 CO2 + 4 H2O. It catalyses the reaction Fe-coproporphyrin III + H2O2 + H(+) = harderoheme III + CO2 + 2 H2O. The enzyme catalyses harderoheme III + H2O2 + H(+) = heme b + CO2 + 2 H2O. It participates in porphyrin-containing compound metabolism; protoheme biosynthesis. In terms of biological role, involved in coproporphyrin-dependent heme b biosynthesis. Catalyzes the decarboxylation of Fe-coproporphyrin III (coproheme) to heme b (protoheme IX), the last step of the pathway. The reaction occurs in a stepwise manner with a three-propionate intermediate. The chain is Coproheme decarboxylase from Staphylococcus epidermidis (strain ATCC 35984 / DSM 28319 / BCRC 17069 / CCUG 31568 / BM 3577 / RP62A).